A 588-amino-acid polypeptide reads, in one-letter code: Aspartate--tRNA(Asp/Asn) ligase (588 aa).

Glutamate 172 is a binding site for L-aspartate. The aspartate stretch occupies residues 196–199; the sequence is QLFK. Position 218 (arginine 218) interacts with L-aspartate. ATP-binding positions include 218 to 220 and glutamine 227; that span reads RDE. Position 450 (histidine 450) interacts with L-aspartate. An ATP-binding site is contributed by glutamate 484. Arginine 491 contributes to the L-aspartate binding site. 536 to 539 serves as a coordination point for ATP; the sequence is GLDR.

Belongs to the class-II aminoacyl-tRNA synthetase family. Type 1 subfamily. In terms of assembly, homodimer.

The protein localises to the cytoplasm. The catalysed reaction is tRNA(Asx) + L-aspartate + ATP = L-aspartyl-tRNA(Asx) + AMP + diphosphate. In terms of biological role, aspartyl-tRNA synthetase with relaxed tRNA specificity since it is able to aspartylate not only its cognate tRNA(Asp) but also tRNA(Asn). Reaction proceeds in two steps: L-aspartate is first activated by ATP to form Asp-AMP and then transferred to the acceptor end of tRNA(Asp/Asn). The chain is Aspartate--tRNA(Asp/Asn) ligase from Nitrosospira multiformis (strain ATCC 25196 / NCIMB 11849 / C 71).